We begin with the raw amino-acid sequence, 440 residues long: Thymidine phosphorylase (440 aa).

This sequence belongs to the thymidine/pyrimidine-nucleoside phosphorylase family. Homodimer.

The enzyme catalyses thymidine + phosphate = 2-deoxy-alpha-D-ribose 1-phosphate + thymine. The protein operates within pyrimidine metabolism; dTMP biosynthesis via salvage pathway; dTMP from thymine: step 1/2. The enzymes which catalyze the reversible phosphorolysis of pyrimidine nucleosides are involved in the degradation of these compounds and in their utilization as carbon and energy sources, or in the rescue of pyrimidine bases for nucleotide synthesis. This chain is Thymidine phosphorylase, found in Salmonella dublin (strain CT_02021853).